Here is a 287-residue protein sequence, read N- to C-terminus: tRNA selenocysteine 1-associated protein 1 (287 aa).

RRM domains are found at residues 3–86 (ASLW…YATY) and 96–175 (YSLF…VAIP).

It belongs to the RRM TRSPAP family. Component of the tRNA(Sec) complex composed at least of EEFSEC, SECISBP2, SEPHS1, SEPSECS, TRNAU1AP and tRNA(Sec). Found in a complex with tRNA(Sec). Interacts with SEPSECS. Associates with mRNP and/or polysomes. Found in a complex with EEFSEC, SECISBP2, TRNAU1AP and tRNA(Sec).

Its subcellular location is the nucleus. It localises to the cytoplasm. In terms of biological role, involved in the early steps of selenocysteine biosynthesis and tRNA(Sec) charging to the later steps resulting in the cotranslational incorporation of selenocysteine into selenoproteins. Stabilizes the SECISBP2, EEFSEC and tRNA(Sec) complex. May be involved in the methylation of tRNA(Sec). Enhances efficiency of selenoproteins synthesis. The protein is tRNA selenocysteine 1-associated protein 1 (TRNAU1AP) of Bos taurus (Bovine).